The chain runs to 545 residues: Methionine--tRNA ligase (545 aa).

A 'HIGH' region motif is present at residues 13–23; the sequence is PYANGEIHLGH. Cys144, Cys147, Cys157, and Cys160 together coordinate Zn(2+). The short motif at 329-333 is the 'KMSKS' region element; the sequence is KMSKS. Lys332 is a binding site for ATP.

This sequence belongs to the class-I aminoacyl-tRNA synthetase family. MetG type 1 subfamily. As to quaternary structure, monomer. Zn(2+) is required as a cofactor.

The protein resides in the cytoplasm. It carries out the reaction tRNA(Met) + L-methionine + ATP = L-methionyl-tRNA(Met) + AMP + diphosphate. Its function is as follows. Is required not only for elongation of protein synthesis but also for the initiation of all mRNA translation through initiator tRNA(fMet) aminoacylation. The chain is Methionine--tRNA ligase from Vesicomyosocius okutanii subsp. Calyptogena okutanii (strain HA).